The following is a 123-amino-acid chain: Small ribosomal subunit protein uS12c (123 aa).

Belongs to the universal ribosomal protein uS12 family. Part of the 30S ribosomal subunit.

Its subcellular location is the plastid. The protein localises to the chloroplast. Functionally, with S4 and S5 plays an important role in translational accuracy. Located at the interface of the 30S and 50S subunits. The chain is Small ribosomal subunit protein uS12c (rps12) from Anthoceros angustus (Hornwort).